Consider the following 940-residue polypeptide: DNA gyrase subunit A (940 aa).

The tract at residues 1–22 (MSDHTNPPSAPPDDDPNGGSLL) is disordered. Positions 48 to 538 (LPDARDGLKP…SLADQDDESL (491 aa)) constitute a Topo IIA-type catalytic domain. Residue tyrosine 136 is the O-(5'-phospho-DNA)-tyrosine intermediate of the active site. The GyrA-box signature appears at 565–571 (QHRGGRG). Acidic residues predominate over residues 914–924 (ESVDDNGDDAD). The interval 914-940 (ESVDDNGDDADSVAPAAPDGQVTDSDD) is disordered.

Belongs to the type II topoisomerase GyrA/ParC subunit family. As to quaternary structure, heterotetramer, composed of two GyrA and two GyrB chains. In the heterotetramer, GyrA contains the active site tyrosine that forms a transient covalent intermediate with DNA, while GyrB binds cofactors and catalyzes ATP hydrolysis.

It localises to the cytoplasm. It carries out the reaction ATP-dependent breakage, passage and rejoining of double-stranded DNA.. A type II topoisomerase that negatively supercoils closed circular double-stranded (ds) DNA in an ATP-dependent manner to modulate DNA topology and maintain chromosomes in an underwound state. Negative supercoiling favors strand separation, and DNA replication, transcription, recombination and repair, all of which involve strand separation. Also able to catalyze the interconversion of other topological isomers of dsDNA rings, including catenanes and knotted rings. Type II topoisomerases break and join 2 DNA strands simultaneously in an ATP-dependent manner. The chain is DNA gyrase subunit A from Granulibacter bethesdensis (strain ATCC BAA-1260 / CGDNIH1).